The chain runs to 355 residues: CX3C chemokine receptor 1 (355 aa).

Residues 1-31 (MDQFPESVTENFEYDDLAEACYIGDIVVFGT) lie on the Extracellular side of the membrane. Residues 32 to 59 (VFLSIFYSVIFAIGLVGNLLVVFALTNS) form a helical membrane-spanning segment. The Cytoplasmic portion of the chain corresponds to 60–69 (KKPKSVTDIY). A helical membrane pass occupies residues 70–90 (LLNLALSDLLFVATLPFWTHY). The Extracellular segment spans residues 91-103 (LINEKGLHNAMCK). Cysteines 102 and 175 form a disulfide. The helical transmembrane segment at 104–125 (FTTAFFFIGFFGSIFFITVISI) threads the bilayer. The Cytoplasmic portion of the chain corresponds to 126–142 (DRYLAIVLAANSMNNRT). A helical transmembrane segment spans residues 143–167 (VQHGVTISLGVWAAAILVAAPQFMF). Over 168-195 (TKQKENECLGDYPEVLQEIWPVLRNVET) the chain is Extracellular. A helical membrane pass occupies residues 196 to 215 (NFLGFLLPLLIMSYCYFRII). Residues 216 to 231 (QTLFSCKNHKKAKAIK) lie on the Cytoplasmic side of the membrane. Residues 232–256 (LILLVVIVFFLFWTPYNVMIFLETL) traverse the membrane as a helical segment. The Extracellular portion of the chain corresponds to 257–273 (KLYDFFPSCDMRKDLRL). A helical membrane pass occupies residues 274–297 (ALSVTETVAFSHCCLNPLIYAFAG). Residues 298-355 (EKFRRYLYHLYGKCLAVLCGRSVHVDFSSSESQRSRHGSVLSSNFTYHTSDGDALLLL) are Cytoplasmic-facing. Thr-346 carries the post-translational modification Phosphothreonine.

It belongs to the G-protein coupled receptor 1 family. As to quaternary structure, found in a ternary complex with CX3CL1 and ITGAV:ITGB3 or ITGA4:ITGB1. (Microbial infection) Interacts with human respiratory syncytial virus (HRSV) protein G; this interaction modulates host immune response. In terms of assembly, (Microbial infection) Interacts with HIV-1 envelope polyprotein gp160. This protein is not N-glycosylated which is unusual for G-protein-coupled receptors. As to expression, expressed in lymphoid and neural tissues. Expressed in lymphocyte subsets, such as natural killer (NK) cells, gamma-delta T-cells and terminally differentiated CD8(+) T-cells. Expressed in smooth muscle cells in atherosclerotic plaques.

It localises to the cell membrane. Receptor for the C-X3-C chemokine fractalkine (CX3CL1) present on many early leukocyte cells; CX3CR1-CX3CL1 signaling exerts distinct functions in different tissue compartments, such as immune response, inflammation, cell adhesion and chemotaxis. CX3CR1-CX3CL1 signaling mediates cell migratory functions. Responsible for the recruitment of natural killer (NK) cells to inflamed tissues. Acts as a regulator of inflammation process leading to atherogenesis by mediating macrophage and monocyte recruitment to inflamed atherosclerotic plaques, promoting cell survival. Involved in airway inflammation by promoting interleukin 2-producing T helper (Th2) cell survival in inflamed lung. Involved in the migration of circulating monocytes to non-inflamed tissues, where they differentiate into macrophages and dendritic cells. Acts as a negative regulator of angiogenesis, probably by promoting macrophage chemotaxis. Plays a key role in brain microglia by regulating inflammatory response in the central nervous system (CNS) and regulating synapse maturation. Required to restrain the microglial inflammatory response in the CNS and the resulting parenchymal damage in response to pathological stimuli. Involved in brain development by participating in synaptic pruning, a natural process during which brain microglia eliminates extra synapses during postnatal development. Synaptic pruning by microglia is required to promote the maturation of circuit connectivity during brain development. Acts as an important regulator of the gut microbiota by controlling immunity to intestinal bacteria and fungi. Expressed in lamina propria dendritic cells in the small intestine, which form transepithelial dendrites capable of taking up bacteria in order to provide defense against pathogenic bacteria. Required to initiate innate and adaptive immune responses against dissemination of commensal fungi (mycobiota) component of the gut: expressed in mononuclear phagocytes (MNPs) and acts by promoting induction of antifungal IgG antibodies response to confer protection against disseminated C.albicans or C.auris infection. Also acts as a receptor for C-C motif chemokine CCL26, inducing cell chemotaxis. Functionally, (Microbial infection) Acts as a coreceptor with CD4 for HIV-1 virus envelope protein. Its function is as follows. (Microbial infection) Acts as a coreceptor with CD4 for HIV-1 virus envelope protein. May have more potent HIV-1 coreceptothr activity than isoform 1. In terms of biological role, (Microbial infection) Acts as a coreceptor with CD4 for HIV-1 virus envelope protein. May have more potent HIV-1 coreceptor activity than isoform 1. The protein is CX3C chemokine receptor 1 of Homo sapiens (Human).